Consider the following 486-residue polypeptide: Cytochrome P450 monooxygenase aclC (486 aa).

Cysteine 427 lines the heme pocket.

The protein belongs to the cytochrome P450 family. Heme serves as cofactor.

It participates in mycotoxin biosynthesis. Cytochrome P450 monooxygenase; part of the gene cluster that mediates the biosynthesis of aspirochlorine (or antibiotic A30641), an unusual halogenated spiro compound with distinctive antifungal properties due to selective inhibition of protein biosynthesis, and which is also active against bacteria, viruses, and murine tumor cells. The non-ribosomal peptide synthetase (NRPS) aclP is responsible the formation of the diketopiperazine (DKP) core from the condensation of 2 phenylalanine residues. One Phe residue is tailored into chlorotyrosine by hydroxylation and chlorination, whereas the second Phe undergoes an unprecedented C-C bond cleavage to be converted into glycine. After formation of the DKP, sulfur is incorporated into the DKP by conjugation with glutathione by aclG, followed by its stepwise degradation to the thiol by aclI, aclJ and aclK, and the dithiol oxidation by aclT. In addition, oxygenases (aclB, aclC, aclL and aclO) and O-methyltransferases (aclM and aclU) act as tailoring enzymes to produce the intermediate dechloroaspirochlorine. Ultimately, chlorination of dechloroaspirochlorine by the halogenase aclH is the last step in the aspirochlorine pathway. The protein is Cytochrome P450 monooxygenase aclC of Aspergillus oryzae (strain ATCC 42149 / RIB 40) (Yellow koji mold).